A 344-amino-acid polypeptide reads, in one-letter code: Secreted LysM effector LysM2 (344 aa).

An N-terminal signal peptide occupies residues 1–24 (MMAPKSLQTGLLILLLAKLKLAWG). Residues 36 to 80 (YEAAASSGDTCTSFAAEWGLTEETFASLNPSAACPSLVAGQNYCM) enclose the LysM 1 domain. Positions 88–134 (STTSSSSSTTSSSTTSSSTTSSSTTSSSTTTSSFTTTTASETTSTAA) are enriched in low complexity. The interval 88 to 141 (STTSSSSSTTSSSTTSSSTTSSSTTSSSTTTSSFTTTTASETTSTAANGVTTPM) is disordered. LysM domains lie at 153 to 199 (KFDL…YVCV), 216 to 262 (KFDL…YVCV), and 296 to 342 (KFWL…YICV).

It belongs to the secreted LysM effector family.

Might have a role in sequestration of chitin oligosaccharides (breakdown products of fungal cell walls that are released during invasion and act as triggers of host immunity) to dampen host defense. The sequence is that of Secreted LysM effector LysM2 from Penicillium expansum (Blue mold rot fungus).